The sequence spans 183 residues: Translation initiation factor IF-3 (183 aa).

It belongs to the IF-3 family. Monomer.

Its subcellular location is the cytoplasm. In terms of biological role, IF-3 binds to the 30S ribosomal subunit and shifts the equilibrium between 70S ribosomes and their 50S and 30S subunits in favor of the free subunits, thus enhancing the availability of 30S subunits on which protein synthesis initiation begins. The protein is Translation initiation factor IF-3 of Aliivibrio salmonicida (strain LFI1238) (Vibrio salmonicida (strain LFI1238)).